A 258-amino-acid polypeptide reads, in one-letter code: UPF0246 protein IL2146 (258 aa).

This sequence belongs to the UPF0246 family.

In Idiomarina loihiensis (strain ATCC BAA-735 / DSM 15497 / L2-TR), this protein is UPF0246 protein IL2146.